The following is a 285-amino-acid chain: Nucleotide-binding protein PFL_0912 (285 aa).

8-15 is a binding site for ATP; that stretch reads GRSGSGKS. 60 to 63 serves as a coordination point for GTP; that stretch reads DARN.

Belongs to the RapZ-like family.

Functionally, displays ATPase and GTPase activities. The chain is Nucleotide-binding protein PFL_0912 from Pseudomonas fluorescens (strain ATCC BAA-477 / NRRL B-23932 / Pf-5).